The sequence spans 310 residues: Homoserine O-acetyltransferase (310 aa).

The active-site Acyl-thioester intermediate is the Cys-142. Residues Lys-163 and Ser-192 each contribute to the substrate site. Residue His-235 is the Proton acceptor of the active site. Glu-237 is a catalytic residue. Arg-249 serves as a coordination point for substrate.

The protein belongs to the MetA family.

The protein resides in the cytoplasm. The enzyme catalyses L-homoserine + acetyl-CoA = O-acetyl-L-homoserine + CoA. It functions in the pathway amino-acid biosynthesis; L-methionine biosynthesis via de novo pathway; O-acetyl-L-homoserine from L-homoserine: step 1/1. In terms of biological role, transfers an acetyl group from acetyl-CoA to L-homoserine, forming acetyl-L-homoserine. The sequence is that of Homoserine O-acetyltransferase from Agathobacter rectalis (strain ATCC 33656 / DSM 3377 / JCM 17463 / KCTC 5835 / VPI 0990) (Eubacterium rectale).